Here is a 63-residue protein sequence, read N- to C-terminus: Cytochrome c oxidase subunit 7C, mitochondrial (63 aa).

The N-terminal 16 residues, methionine 1–arginine 16, are a transit peptide targeting the mitochondrion. Over serine 17–asparagine 33 the chain is Mitochondrial matrix. An N6-acetyllysine; alternate modification is found at lysine 25. N6-succinyllysine; alternate is present on lysine 25. The chain crosses the membrane as a helical span at residues lysine 34–leucine 60. The Mitochondrial intermembrane portion of the chain corresponds to leucine 61–threonine 63.

This sequence belongs to the cytochrome c oxidase VIIc family. In terms of assembly, component of the cytochrome c oxidase (complex IV, CIV), a multisubunit enzyme composed of 14 subunits. The complex is composed of a catalytic core of 3 subunits MT-CO1, MT-CO2 and MT-CO3, encoded in the mitochondrial DNA, and 11 supernumerary subunits COX4I1 (or COX4I2), COX5A, COX5B, COX6A1 (or COX6A2), COX6B1 (or COX6B2), COX6C, COX7A2 (or COX7A1), COX7B, COX7C, COX8A and NDUFA4, which are encoded in the nuclear genome. The complex exists as a monomer or a dimer and forms supercomplexes (SCs) in the inner mitochondrial membrane with NADH-ubiquinone oxidoreductase (complex I, CI) and ubiquinol-cytochrome c oxidoreductase (cytochrome b-c1 complex, complex III, CIII), resulting in different assemblies (supercomplex SCI(1)III(2)IV(1) and megacomplex MCI(2)III(2)IV(2)). Interacts with RAB5IF.

The protein resides in the mitochondrion inner membrane. Its pathway is energy metabolism; oxidative phosphorylation. Functionally, component of the cytochrome c oxidase, the last enzyme in the mitochondrial electron transport chain which drives oxidative phosphorylation. The respiratory chain contains 3 multisubunit complexes succinate dehydrogenase (complex II, CII), ubiquinol-cytochrome c oxidoreductase (cytochrome b-c1 complex, complex III, CIII) and cytochrome c oxidase (complex IV, CIV), that cooperate to transfer electrons derived from NADH and succinate to molecular oxygen, creating an electrochemical gradient over the inner membrane that drives transmembrane transport and the ATP synthase. Cytochrome c oxidase is the component of the respiratory chain that catalyzes the reduction of oxygen to water. Electrons originating from reduced cytochrome c in the intermembrane space (IMS) are transferred via the dinuclear copper A center (CU(A)) of subunit 2 and heme A of subunit 1 to the active site in subunit 1, a binuclear center (BNC) formed by heme A3 and copper B (CU(B)). The BNC reduces molecular oxygen to 2 water molecules using 4 electrons from cytochrome c in the IMS and 4 protons from the mitochondrial matrix. The sequence is that of Cytochrome c oxidase subunit 7C, mitochondrial (COX7C) from Homo sapiens (Human).